Reading from the N-terminus, the 360-residue chain is Aminomethyltransferase (360 aa).

It belongs to the GcvT family. The glycine cleavage system is composed of four proteins: P, T, L and H.

It catalyses the reaction N(6)-[(R)-S(8)-aminomethyldihydrolipoyl]-L-lysyl-[protein] + (6S)-5,6,7,8-tetrahydrofolate = N(6)-[(R)-dihydrolipoyl]-L-lysyl-[protein] + (6R)-5,10-methylene-5,6,7,8-tetrahydrofolate + NH4(+). Its function is as follows. The glycine cleavage system catalyzes the degradation of glycine. In Bdellovibrio bacteriovorus (strain ATCC 15356 / DSM 50701 / NCIMB 9529 / HD100), this protein is Aminomethyltransferase.